The following is a 319-amino-acid chain: Tyrosine--tRNA ligase (319 aa).

An L-tyrosine-binding site is contributed by Y40. Positions 45–53 (PSGRIHMGH) match the 'HIGH' region motif. L-tyrosine contacts are provided by Y159, Q163, D166, and Q181. The short motif at 216–220 (KMSSS) is the 'KMSKS' region element. S219 contacts ATP.

Belongs to the class-I aminoacyl-tRNA synthetase family. TyrS type 3 subfamily. Homodimer.

The protein localises to the cytoplasm. The enzyme catalyses tRNA(Tyr) + L-tyrosine + ATP = L-tyrosyl-tRNA(Tyr) + AMP + diphosphate + H(+). In terms of biological role, catalyzes the attachment of tyrosine to tRNA(Tyr) in a two-step reaction: tyrosine is first activated by ATP to form Tyr-AMP and then transferred to the acceptor end of tRNA(Tyr). The protein is Tyrosine--tRNA ligase of Methanococcus maripaludis (strain DSM 14266 / JCM 13030 / NBRC 101832 / S2 / LL).